The primary structure comprises 296 residues: Glycine--tRNA ligase alpha subunit (296 aa).

This sequence belongs to the class-II aminoacyl-tRNA synthetase family. Tetramer of two alpha and two beta subunits.

The protein resides in the cytoplasm. It carries out the reaction tRNA(Gly) + glycine + ATP = glycyl-tRNA(Gly) + AMP + diphosphate. The chain is Glycine--tRNA ligase alpha subunit from Desulfitobacterium hafniense (strain DSM 10664 / DCB-2).